The primary structure comprises 272 residues: Dermonecrotic toxin LspaSicTox-alphaII1 (272 aa).

H5 is a catalytic residue. E25 and D27 together coordinate Mg(2+). H41 functions as the Nucleophile in the catalytic mechanism. Disulfide bonds link C45/C51 and C47/C190. D85 provides a ligand contact to Mg(2+).

The protein belongs to the arthropod phospholipase D family. Class II subfamily. Mg(2+) serves as cofactor. Expressed by the venom gland.

It is found in the secreted. The catalysed reaction is an N-(acyl)-sphingosylphosphocholine = an N-(acyl)-sphingosyl-1,3-cyclic phosphate + choline. It carries out the reaction an N-(acyl)-sphingosylphosphoethanolamine = an N-(acyl)-sphingosyl-1,3-cyclic phosphate + ethanolamine. The enzyme catalyses a 1-acyl-sn-glycero-3-phosphocholine = a 1-acyl-sn-glycero-2,3-cyclic phosphate + choline. It catalyses the reaction a 1-acyl-sn-glycero-3-phosphoethanolamine = a 1-acyl-sn-glycero-2,3-cyclic phosphate + ethanolamine. Functionally, dermonecrotic toxins cleave the phosphodiester linkage between the phosphate and headgroup of certain phospholipids (sphingolipid and lysolipid substrates), forming an alcohol (often choline) and a cyclic phosphate. This toxin acts on sphingomyelin (SM). It may also act on ceramide phosphoethanolamine (CPE), lysophosphatidylcholine (LPC) and lysophosphatidylethanolamine (LPE), but not on lysophosphatidylserine (LPS), and lysophosphatidylglycerol (LPG). It acts by transphosphatidylation, releasing exclusively cyclic phosphate products as second products. Induces dermonecrosis, hemolysis, increased vascular permeability, edema, inflammatory response, and platelet aggregation. The chain is Dermonecrotic toxin LspaSicTox-alphaII1 from Loxosceles spadicea (Recluse spider).